Here is a 349-residue protein sequence, read N- to C-terminus: Protein O-mannose kinase (349 aa).

The Cytoplasmic portion of the chain corresponds to 1–19 (MGQQHGARNGLTHRELPRG). A helical; Signal-anchor for type II membrane protein transmembrane segment spans residues 20–42 (MGLLLAMALMNVVLYVCLDHLFI). The Lumenal segment spans residues 43-349 (SPGRATEDPR…TVMSQTKEML (307 aa)). Residues Asn66, Asn164, and Asn219 are each glycosylated (N-linked (GlcNAc...) asparagine). One can recognise a Protein kinase domain in the interval 80–349 (VRQLKLVGEG…TVMSQTKEML (270 aa)).

It belongs to the protein kinase superfamily. Ser/Thr protein kinase family. STKL subfamily.

Its subcellular location is the endoplasmic reticulum membrane. The enzyme catalyses 3-O-[beta-D-GalNAc-(1-&gt;3)-beta-D-GlcNAc-(1-&gt;4)-alpha-D-Man]-L-Thr-[protein] + ATP = 3-O-[beta-D-GalNAc-(1-&gt;3)-beta-D-GlcNAc-(1-&gt;4)-(O-6-P-alpha-D-Man)]-Thr-[protein] + ADP + H(+). Protein O-mannose kinase that specifically mediates phosphorylation at the 6-position of an O-mannose of the trisaccharide (N-acetylgalactosamine (GalNAc)-beta-1,3-N-acetylglucosamine (GlcNAc)-beta-1,4-mannose) to generate phosphorylated O-mannosyl trisaccharide (N-acetylgalactosamine-beta-1,3-N-acetylglucosamine-beta-1,4-(phosphate-6-)mannose). Phosphorylated O-mannosyl trisaccharide is a carbohydrate structure present in alpha-dystroglycan (DAG1), which is required for binding laminin G-like domain-containing extracellular proteins with high affinity. Only shows kinase activity when the GalNAc-beta-3-GlcNAc-beta-terminus is linked to the 4-position of O-mannose, suggesting that this disaccharide serves as the substrate recognition motif. The protein is Protein O-mannose kinase (Pomk) of Rattus norvegicus (Rat).